Consider the following 130-residue polypeptide: Small ribosomal subunit protein uS11 (130 aa).

The protein belongs to the universal ribosomal protein uS11 family. As to quaternary structure, part of the 30S ribosomal subunit. Interacts with proteins S7 and S18. Binds to IF-3.

In terms of biological role, located on the platform of the 30S subunit, it bridges several disparate RNA helices of the 16S rRNA. Forms part of the Shine-Dalgarno cleft in the 70S ribosome. This Synechococcus sp. (strain WH7803) protein is Small ribosomal subunit protein uS11.